The chain runs to 157 residues: Small ribosomal subunit protein uS7 (157 aa).

This sequence belongs to the universal ribosomal protein uS7 family. In terms of assembly, part of the 30S ribosomal subunit. Contacts proteins S9 and S11.

One of the primary rRNA binding proteins, it binds directly to 16S rRNA where it nucleates assembly of the head domain of the 30S subunit. Is located at the subunit interface close to the decoding center, probably blocks exit of the E-site tRNA. This is Small ribosomal subunit protein uS7 from Variovorax paradoxus (strain S110).